We begin with the raw amino-acid sequence, 339 residues long: Cathepsin B (339 aa).

Positions 1–17 (MWQLWASLCCLLALADA) are cleaved as a signal peptide. A propeptide spans 18-79 (RSRPSFHPLS…QRVMFTEDLK (62 aa)) (activation peptide). Cystine bridges form between Cys93–Cys122, Cys105–Cys150, Cys141–Cys207, Cys142–Cys146, Cys179–Cys211, and Cys187–Cys198. Residue Cys108 is part of the active site. An N-linked (GlcNAc...) asparagine glycan is attached at Asn192. Lys220 is modified (N6-acetyllysine). Active-site residues include His278 and Asn298. A propeptide spanning residues 334 to 339 (QYWEKI) is cleaved from the precursor.

The protein belongs to the peptidase C1 family. As to quaternary structure, dimer of a heavy chain and a light chain cross-linked by a disulfide bond. Interacts with SRPX2. Directly interacts with SHKBP1.

The protein localises to the lysosome. The protein resides in the melanosome. It is found in the secreted. Its subcellular location is the extracellular space. It localises to the apical cell membrane. It catalyses the reaction Hydrolysis of proteins with broad specificity for peptide bonds. Preferentially cleaves -Arg-Arg-|-Xaa bonds in small molecule substrates (thus differing from cathepsin L). In addition to being an endopeptidase, shows peptidyl-dipeptidase activity, liberating C-terminal dipeptides.. In terms of biological role, thiol protease which is believed to participate in intracellular degradation and turnover of proteins. Cleaves matrix extracellular phosphoglycoprotein MEPE. Involved in the solubilization of cross-linked TG/thyroglobulin in the thyroid follicle lumen. Has also been implicated in tumor invasion and metastasis. This Pongo abelii (Sumatran orangutan) protein is Cathepsin B (CTSB).